The chain runs to 308 residues: Serine/threonine-protein phosphatase 4 catalytic subunit (308 aa).

4 residues coordinate Mn(2+): Asp51, His53, Asp79, and Asn111. The active-site Proton donor is His112. Mn(2+)-binding residues include His161 and His235. Leu308 is subject to Leucine methyl ester.

The protein belongs to the PPP phosphatase family. PP-4 (PP-X) subfamily. Catalytic subunit of the histone H2A phosphatase complex (HTP-C) containing PPH3, PSY2 and PSY4. Mn(2+) serves as cofactor.

It localises to the cytoplasm. It is found in the nucleus. It carries out the reaction O-phospho-L-seryl-[protein] + H2O = L-seryl-[protein] + phosphate. The catalysed reaction is O-phospho-L-threonyl-[protein] + H2O = L-threonyl-[protein] + phosphate. Its function is as follows. Forms the histone H2A phosphatase complex in association with the regulatory subunits PSY2 and PSY4, which dephosphorylates H2AS128ph (gamma-H2A) that has been displaced from sites of DNA lesions in the double-stranded DNA break repair process. Dephosphorylation is necessary for efficient recovery from the DNA damage checkpoint. This is Serine/threonine-protein phosphatase 4 catalytic subunit (PPH3) from Kluyveromyces lactis (strain ATCC 8585 / CBS 2359 / DSM 70799 / NBRC 1267 / NRRL Y-1140 / WM37) (Yeast).